A 346-amino-acid polypeptide reads, in one-letter code: tRNA(Ile)-lysidine synthase (346 aa).

An ATP-binding site is contributed by 32 to 37 (SGGPDS).

It belongs to the tRNA(Ile)-lysidine synthase family.

It is found in the cytoplasm. The catalysed reaction is cytidine(34) in tRNA(Ile2) + L-lysine + ATP = lysidine(34) in tRNA(Ile2) + AMP + diphosphate + H(+). In terms of biological role, ligates lysine onto the cytidine present at position 34 of the AUA codon-specific tRNA(Ile) that contains the anticodon CAU, in an ATP-dependent manner. Cytidine is converted to lysidine, thus changing the amino acid specificity of the tRNA from methionine to isoleucine. The protein is tRNA(Ile)-lysidine synthase of Rhodopseudomonas palustris (strain ATCC BAA-98 / CGA009).